The chain runs to 161 residues: Cyclic pyranopterin monophosphate synthase (161 aa).

Substrate-binding positions include 75–77 (LCH) and 113–114 (ME). Residue aspartate 128 is part of the active site.

This sequence belongs to the MoaC family. In terms of assembly, homohexamer; trimer of dimers.

The catalysed reaction is (8S)-3',8-cyclo-7,8-dihydroguanosine 5'-triphosphate = cyclic pyranopterin phosphate + diphosphate. It participates in cofactor biosynthesis; molybdopterin biosynthesis. Its function is as follows. Catalyzes the conversion of (8S)-3',8-cyclo-7,8-dihydroguanosine 5'-triphosphate to cyclic pyranopterin monophosphate (cPMP). This chain is Cyclic pyranopterin monophosphate synthase, found in Escherichia coli O9:H4 (strain HS).